The primary structure comprises 889 residues: Alanine--tRNA ligase (889 aa).

The Zn(2+) site is built by His574, His578, Cys676, and His680.

This sequence belongs to the class-II aminoacyl-tRNA synthetase family. It depends on Zn(2+) as a cofactor.

It is found in the cytoplasm. It catalyses the reaction tRNA(Ala) + L-alanine + ATP = L-alanyl-tRNA(Ala) + AMP + diphosphate. Catalyzes the attachment of alanine to tRNA(Ala) in a two-step reaction: alanine is first activated by ATP to form Ala-AMP and then transferred to the acceptor end of tRNA(Ala). Also edits incorrectly charged Ser-tRNA(Ala) and Gly-tRNA(Ala) via its editing domain. This Thermobifida fusca (strain YX) protein is Alanine--tRNA ligase.